The following is a 91-amino-acid chain: Envelope glycoprotein N (91 aa).

The first 23 residues, 1 to 23, serve as a signal peptide directing secretion; the sequence is MGPPRRVCRAGLLFVLLVALAAG. Residues 23–48 are disordered; the sequence is GDAGPRGEPPGEEGGRDGIGGARCET. Topologically, residues 24–55 are virion surface; sequence DAGPRGEPPGEEGGRDGIGGARCETQNTGQMS. The chain crosses the membrane as a helical span at residues 56–76; that stretch reads APGALVPFYVGMASMGVCIIA. The Intravirion segment spans residues 77-91; sequence HVCQICQRLLAAGHA.

This sequence belongs to the herpesviridae glycoprotein N family. In terms of assembly, interacts (via N-terminus) with gM (via N-terminus). The gM-gN heterodimer forms the gCII complex.

Its subcellular location is the virion membrane. It localises to the host membrane. It is found in the host Golgi apparatus. The protein resides in the host trans-Golgi network. Functionally, envelope glycoprotein necessary for proper maturation of gM and modulation of its membrane fusion activity. Also plays a critical role in virion morphogenesis. The sequence is that of Envelope glycoprotein N from Homo sapiens (Human).